A 239-amino-acid chain; its full sequence is Thymidylate kinase (239 aa).

Residue 10 to 17 (GVNRVGKS) coordinates ATP.

This sequence belongs to the thymidylate kinase family.

The enzyme catalyses dTMP + ATP = dTDP + ADP. It participates in pyrimidine metabolism; dTTP biosynthesis. Functionally, catalyzes the conversion of dTMP to dTDP. The sequence is that of Thymidylate kinase (TMK) from African swine fever virus (isolate Tick/South Africa/Pretoriuskop Pr4/1996) (ASFV).